Consider the following 145-residue polypeptide: Protein SprT-like (145 aa).

The SprT-like domain maps to 5–141 (NYVKQVSVED…CGRCMGKLRL (137 aa)). Residue H64 coordinates Zn(2+). The active site involves E65. Zn(2+) is bound at residue H68.

It belongs to the SprT family. The cofactor is Zn(2+).

It localises to the cytoplasm. The sequence is that of Protein SprT-like from Streptococcus sanguinis (strain SK36).